An 863-amino-acid polypeptide reads, in one-letter code: MDARGGGGRPGDSPGTTPAPGPPPPPPPPAPPQPQPPPAPPPNPTTPSHPESADEPGPRARLCSRDSACTPGAAKGGANGECGRGEPQCSPEGPARGPKVSFSCRGAASGPSAAEEAGSEEAGPAGEPRGSQASFLQRQFGALLQPGVNKFSLRMFGSQKAVEREQERVKSAGAWIIHPYSDFRFYWDFTMLLFMVGNLIIIPVGITFFKDETTAPWIVFNVVSDTFFLMDLVLNFRTGIVIEDNTEIILDPEKIKKKYLRTWFVVDFVSSIPVDYIFLIVEKGIDSEVYKTARALRIVRFTKILSLLRLLRLSRLIRYIHQWEEIFHMTYDLASAVMRICNLISMMLLLCHWDGCLQFLVPMLQDFPSDCWVSINNMVNHSWSELYSFALFKAMSHMLCIGYGRQAPESMTDIWLTMLSMIVGATCYAMFIGHATALIQSLDSSRRQYQEKYKQVEQYMSFHKLPADFRQKIHDYYEHRYQGKMFDEDSILGELNGPLREEIVNFNCRKLVASMPLFANADPNFVTAMLTKLKFEVFQPGDYIIREGTIGKKMYFIQHGVVSVLTKGNKEMKLSDGSYFGEICLLTRGRRTASVRADTYCRLYSLSVDNFNEVLEEYPMMRRAFETVAIDRLDRIGKKNSILLHKVQHDLSSGVFNNQENAIIQEIVKYDREMVQQAELGQRVGLFPPPPPPQVTSAIATLQQAVAMSFCPQVARPLVGPLALGSPRLVRRAPPGPLPPAASPGPPAASPPAAPSSPRAPRTSPYGVPGSPATRVGPALPARRLSRASRPLSASQPSLPHGVPAPSPAASARPASSSTPRLGPAPTARTAAPSPDRRDSASPGAASGLDPLDSARSRLSSNL.

Gly residues predominate over residues 1-10 (MDARGGGGRP). A disordered region spans residues 1–131 (MDARGGGGRP…AGPAGEPRGS (131 aa)). Topologically, residues 1 to 188 (MDARGGGGRP…PYSDFRFYWD (188 aa)) are cytoplasmic. Residues 17-47 (TPAPGPPPPPPPPAPPQPQPPPAPPPNPTTP) are compositionally biased toward pro residues. The segment covering 106–128 (GAASGPSAAEEAGSEEAGPAGEP) has biased composition (low complexity). Phosphoserine occurs at positions 119 and 134. Positions 131 to 182 (SQASFLQRQFGALLQPGVNKFSLRMFGSQKAVEREQERVKSAGAWIIHPYSD) are involved in subunit assembly. A helical membrane pass occupies residues 189–209 (FTMLLFMVGNLIIIPVGITFF). The Extracellular segment spans residues 210-213 (KDET). The helical transmembrane segment at 214 to 234 (TAPWIVFNVVSDTFFLMDLVL) threads the bilayer. Residues 235–261 (NFRTGIVIEDNTEIILDPEKIKKKYLR) lie on the Cytoplasmic side of the membrane. The chain crosses the membrane as a helical span at residues 262-282 (TWFVVDFVSSIPVDYIFLIVE). Over 283 to 290 (KGIDSEVY) the chain is Extracellular. A helical; Voltage-sensor transmembrane segment spans residues 291 to 311 (KTARALRIVRFTKILSLLRLL). Residues 312 to 342 (RLSRLIRYIHQWEEIFHMTYDLASAVMRICN) are Cytoplasmic-facing. Residues 343–363 (LISMMLLLCHWDGCLQFLVPM) form a helical membrane-spanning segment. Residues 364-386 (LQDFPSDCWVSINNMVNHSWSEL) lie on the Extracellular side of the membrane. Residue N380 is glycosylated (N-linked (GlcNAc...) asparagine). An intramembrane region (pore-forming) is located at residues 387–408 (YSFALFKAMSHMLCIGYGRQAP). Topologically, residues 409-413 (ESMTD) are extracellular. Residues 414 to 434 (IWLTMLSMIVGATCYAMFIGH) traverse the membrane as a helical segment. At 435–863 (ATALIQSLDS…SARSRLSSNL (429 aa)) the chain is on the cytoplasmic side. 3',5'-cyclic AMP contacts are provided by G581, E582, C584, R591, T592, and R632. Position 641 is a phosphoserine; by PKG/PRKG2 (S641). S726 carries the phosphoserine modification. R728 is modified (omega-N-methylarginine). Residues 730–863 (VRRAPPGPLP…SARSRLSSNL (134 aa)) form a disordered region. The segment covering 734–755 (PPGPLPPAASPGPPAASPPAAP) has biased composition (pro residues). Phosphoserine occurs at positions 743, 750, and 757. Low complexity-rich tracts occupy residues 756-765 (SSPRAPRTSP), 778-800 (PALP…PSLP), and 808-834 (PAAS…AAPS). Phosphoserine occurs at positions 840, 842, and 847.

Belongs to the potassium channel HCN family. As to quaternary structure, homotetramer. The channel is composed of a homo- or heterotetrameric complex of pore-forming subunits. Heterotetramer with HCN1. Forms an obligate 4:4 complex with accessory subunit PEX5L; regulates HCN2 cell-surface expression and cyclic nucleotide dependence. Interacts with KCNE2. S-palmitoylated. Post-translationally, N-glycosylated; required for cell surface trafficking of HCN2. In terms of processing, phosphorylation at Ser-641 by PRKG2 shifts the voltage-dependence to more negative voltages, hence counteracting the stimulatory effect of cGMP on gating. As to expression, highly expressed in brain. Detected at low levels in heart, in ventricle, atrium and in sinoatrial node (SAN).

The protein localises to the cell membrane. The enzyme catalyses Na(+)(in) = Na(+)(out). It carries out the reaction K(+)(in) = K(+)(out). It catalyses the reaction NH4(+)(in) = NH4(+)(out). Activated by cAMP, and at 10-100 times higher concentrations, also by cGMP. cAMP binding causes a conformation change that leads to the assembly of an active tetramer and channel opening. In the absence of cAMP, the C-terminal region is thought to exert a tonic inhibition on the pore when HCN2 is in a non-tetrameric form. Channel activity is modulated by intracellular chloride ions and pH; acidic pH shifts the activation to more negative voltages. Phosphatidylinositol-4,5- bisphosphate (PIP(2)) acts as a ligand that allosterically opens HCN2 by shifting voltage-dependent channel activation toward depolarized potentials. Inhibited by extracellular cesium ions. In terms of biological role, hyperpolarization-activated ion channel exhibiting weak selectivity for potassium over sodium ions. Contributes to the native pacemaker currents in heart (If) and in neurons (Ih). Can also transport ammonium in the distal nephron. Involved in the initiation of neuropathic pain in sensory neurons. The protein is Potassium/sodium hyperpolarization-activated cyclic nucleotide-gated channel 2 of Mus musculus (Mouse).